A 236-amino-acid chain; its full sequence is ATP synthase subunit a (236 aa).

5 consecutive transmembrane segments (helical) span residues 17–37 (LANV…AVLA), 80–100 (MTLI…SVVI), 114–134 (VVTL…GIKL), 179–199 (ILLA…IAAI), and 208–228 (FSIF…MVYM).

This sequence belongs to the ATPase A chain family. As to quaternary structure, F-type ATPases have 2 components, CF(1) - the catalytic core - and CF(0) - the membrane proton channel. CF(1) has five subunits: alpha(3), beta(3), gamma(1), delta(1), epsilon(1). CF(0) has three main subunits: a(1), b(2) and c(9-12). The alpha and beta chains form an alternating ring which encloses part of the gamma chain. CF(1) is attached to CF(0) by a central stalk formed by the gamma and epsilon chains, while a peripheral stalk is formed by the delta and b chains.

The protein localises to the cell membrane. Functionally, key component of the proton channel; it plays a direct role in the translocation of protons across the membrane. The protein is ATP synthase subunit a of Anoxybacillus flavithermus (strain DSM 21510 / WK1).